Reading from the N-terminus, the 147-residue chain is Large ribosomal subunit protein uL15 (147 aa).

Positions 1-20 (MTLRLNDLKPADGARTERTR) are enriched in basic and acidic residues. The interval 1 to 61 (MTLRLNDLKP…GFEGGQTPMQ (61 aa)) is disordered. Positions 23–33 (RGIGSGLGKTA) are enriched in gly residues. A compositionally biased stretch (basic residues) spans 34–47 (GRGHKGSFARKGGG).

The protein belongs to the universal ribosomal protein uL15 family. Part of the 50S ribosomal subunit.

Functionally, binds to the 23S rRNA. The polypeptide is Large ribosomal subunit protein uL15 (Xanthomonas axonopodis pv. citri (strain 306)).